The chain runs to 433 residues: MRMIDIIEKKRDGKSLTKEEIEFFVNGYTHEEVPDYQASSLAMAIFFQDMNDEERAALTMSMVNSGEKIDLSDINGIKVDKHSTGGVGDTTTLVLAPLVAAVGVPVAKMSGRGLGHTGGTIDKLESVKGFNVEISEKDFIKLVNDNQVAVIGQSGNLTPADKKLYALRDVTGTVNSIPLIASSIMSKKIAAGADAIVLDVKTGSGAFMKTLDDAEALAHAMVRIGNNVGRNTMAIISDMSQPLGNAIGNALELKEAISTLKGNGPKDLTELVLTLGSQMVVLAEQATSLDEARQMLIDAIKTGKALNKFKTFLSNQGGDDSIVDSPEKLPSAKYQVEFKAKKDGYITEIIANEIGVASMMLGAGRQTKEDVIDLGVGIVLNKKVGEHVEKGENILTIHTNTKEIDDILYKLDNSITIESKGEAPTLIHKIITE.

Phosphate is bound at residue 81-83 (KHS). K(+) is bound by residues Gly-88 and Thr-90. Residues Thr-92, 108-110 (KMS), and Thr-120 contribute to the phosphate site. Positions 168 and 187 each coordinate substrate. K(+)-binding residues include Leu-243, Ala-246, and Glu-255.

The protein belongs to the thymidine/pyrimidine-nucleoside phosphorylase family. Homodimer. The cofactor is K(+).

The catalysed reaction is uridine + phosphate = alpha-D-ribose 1-phosphate + uracil. The enzyme catalyses thymidine + phosphate = 2-deoxy-alpha-D-ribose 1-phosphate + thymine. It carries out the reaction 2'-deoxyuridine + phosphate = 2-deoxy-alpha-D-ribose 1-phosphate + uracil. In terms of biological role, catalyzes phosphorolysis of the pyrimidine nucleosides uridine, thymidine and 2'-deoxyuridine with the formation of the corresponding pyrimidine base and ribose-1-phosphate. This Staphylococcus epidermidis (strain ATCC 12228 / FDA PCI 1200) protein is Pyrimidine-nucleoside phosphorylase (pdp).